We begin with the raw amino-acid sequence, 532 residues long: MELPVPQKLPDPPRSFDEFLKSQNWDYWPRDVHFRDSDIWEDTLKKLEEAISYTSIYSYLWTNVPRLYDIVDSLESKLKESSHLLQHHASRLFESDKMISKKRSYTNLERYKAFVKEHYRPKKIALSDRMETEKNIEGCTFLFNQNEVTQLPRHLDAKQIYLYVLKTHNFEEKVFKVWKTHVLSDCSIALLHDSFWWWFLHKFKPDKRDEDFLFDRIAESYVTLFIKIPLRRKDAFFKMYPDCLTQAVYTTFQESFPESCSLFNDKFKEDLGNTIFLWLSGLKPETGFWTHWKLQDLCTTTIHGSRRVPVKLRRSVIPSQEHIPGIRDLKIEDILKNPRAYAMPKLMKESVASKAATKPSHYRSLGPEFHKVLFDFGGQSPLILYYLKMHELGGISVTHNPKGTKFTKILREPSPAPTYCDIIRDAKRKFADNKKDFKRVKQRIKDDIKFLREQQELIDKELDRIQAKASKNLQEVKNEFENFLHKQRVEAKLKEEYGGSTSASESPQSMQSPQSSSSFPTISEDFNNVEEG.

Residues 432-482 (DNKKDFKRVKQRIKDDIKFLREQQELIDKELDRIQAKASKNLQEVKNEFEN) are a coiled coil. Residues 494–532 (KEEYGGSTSASESPQSMQSPQSSSSFPTISEDFNNVEEG) are disordered. Positions 500–523 (STSASESPQSMQSPQSSSSFPTIS) are enriched in low complexity.

The protein belongs to the FAM227 family.

The polypeptide is Protein FAM227B (Fam227b) (Mus musculus (Mouse)).